The chain runs to 315 residues: Olfactory receptor 3A1 (315 aa).

Over 1–28 the chain is Extracellular; sequence MQPESGANGTVIAEFILLGLLEAPGLQP. Asn-8 carries an N-linked (GlcNAc...) asparagine glycan. Residues 29–52 traverse the membrane as a helical segment; sequence VVFVLFLFAYLVTVRGNLSILAAV. At 53 to 60 the chain is on the cytoplasmic side; the sequence is LVEPKLHT. A helical transmembrane segment spans residues 61-82; the sequence is PMYFFLGNLSVLDVGCISVTVP. The Extracellular segment spans residues 83–103; the sequence is SMLSRLLSRKRAVPCGACLTQ. Cys-100 and Cys-192 are joined by a disulfide. Residues 104–123 form a helical membrane-spanning segment; that stretch reads LFFFHLFVGVDCFLLTAMAY. Residues 124–143 are Cytoplasmic-facing; it reads DRFLAICRPLTYSTRMSQTV. A helical transmembrane segment spans residues 144 to 161; sequence QRMLVAASWACAFTNALT. At 162 to 199 the chain is on the extracellular side; that stretch reads HTVAMSTLNFCGPNVINHFYCDLPQLFQLSCSSTQLNE. Residues 200 to 223 traverse the membrane as a helical segment; it reads LLLFAVGFIMAGTPMALIVISYIH. The Cytoplasmic portion of the chain corresponds to 224–240; that stretch reads VAAAVLRIRSVEGRKKA. Residues 241 to 264 traverse the membrane as a helical segment; that stretch reads FSTCGSHLTVVAIFYGSGIFNYMR. Topologically, residues 265-275 are extracellular; it reads LGSTKLSDKDK. The chain crosses the membrane as a helical span at residues 276 to 295; that stretch reads AVGIFNTVINPMLNPIIYSF. Over 296 to 315 the chain is Cytoplasmic; the sequence is RNPDVQSAIWRMLTGRRSLA.

Belongs to the G-protein coupled receptor 1 family.

The protein resides in the cell membrane. Functionally, odorant receptor. The sequence is that of Olfactory receptor 3A1 (OR3A1) from Homo sapiens (Human).